Consider the following 437-residue polypeptide: Protein translocase subunit SecY (437 aa).

10 helical membrane-spanning segments follow: residues 19-39 (LFTLGIIVIYRIGTHIPIPGV), 69-89 (LLQITIFALGIMPYITASIIL), 122-142 (VALAVLQGTGLVATARSGALF), 157-177 (IFTTLTMVVTMTAGTAVVMWL), 189-209 (GMSILMFISIAATFPSALWSI), 219-239 (WIEFGIVIAVGLVMVALVVFV), 275-295 (GIIPVIFASSLLYIPALVVQF), 318-338 (HITVYFFLIIFFAFFYVAISF), 378-398 (GSLYLGLIALVPTMALAPLGA), and 400-420 (QNFPFGGTSILIIVGVGLETV).

The protein belongs to the SecY/SEC61-alpha family. Component of the Sec protein translocase complex. Heterotrimer consisting of SecY, SecE and SecG subunits. The heterotrimers can form oligomers, although 1 heterotrimer is thought to be able to translocate proteins. Interacts with the ribosome. Interacts with SecDF, and other proteins may be involved. Interacts with SecA.

Its subcellular location is the cell membrane. The central subunit of the protein translocation channel SecYEG. Consists of two halves formed by TMs 1-5 and 6-10. These two domains form a lateral gate at the front which open onto the bilayer between TMs 2 and 7, and are clamped together by SecE at the back. The channel is closed by both a pore ring composed of hydrophobic SecY resides and a short helix (helix 2A) on the extracellular side of the membrane which forms a plug. The plug probably moves laterally to allow the channel to open. The ring and the pore may move independently. The sequence is that of Protein translocase subunit SecY from Streptomyces scabiei.